A 348-amino-acid chain; its full sequence is MAGRGKRKPRSLPQTETPNGEVKKAKEGLKDDKTSVGEEMREEVERLYKLRMPDDFFQFWDFCEGLNADCPQDALKNTLGLQLVGPFDILSKKHKNSSSQPNFHLHWRYFYDPPEFQTIIQGNADTQHHMGYFRDLPDALPVFIGENEAKKGYTITQLGDNIFAAVLLFLQKKKKEKRQQKDDAALNRLEEDLKREAERLGLPLEQKTKSMKQRERKVVTKTFHGAGIVVPVDKNDVGYRELPESDASLKKICKAIAEAKDDEERMKAFAPIQEMITFVQFANDECDYGMGYELGIDLFCYGSHYFFKVVRQLLPMAYNLLKRGLFGEILEAHLASRSQDNLDQLAAV.

Positions 1–10 (MAGRGKRKPR) are enriched in basic residues. Positions 1 to 38 (MAGRGKRKPRSLPQTETPNGEVKKAKEGLKDDKTSVGE) are disordered. Over residues 21 to 38 (EVKKAKEGLKDDKTSVGE) the composition is skewed to basic and acidic residues. Residues 170-200 (LQKKKKEKRQQKDDAALNRLEEDLKREAERL) adopt a coiled-coil conformation. E285 acts as the Proton donor in catalysis.

Belongs to the HPF1 family. In terms of assembly, interacts with PARP1 (via the PARP catalytic domain). Interacts with PARP2 (via the PARP catalytic domain). Interacts with core nucleosomes in a parp1- and parp2-dependent manner. As to expression, in adult, mainly expressed in gonads.

The protein resides in the chromosome. Its subcellular location is the nucleus. Functionally, cofactor for serine ADP-ribosylation that confers serine specificity on parp1 and parp2 and plays a key role in DNA damage response. Initiates the repair of double-strand DNA breaks: recruited to DNA damage sites by parp1 and parp2 and switches the amino acid specificity of parp1 and parp2 from aspartate or glutamate to serine residues, licensing serine ADP-ribosylation of target proteins. Serine ADP-ribosylation of target proteins, such as histones, promotes decompaction of chromatin and the recruitment of repair factors leading to the reparation of DNA strand breaks. Serine ADP-ribosylation of proteins constitutes the primary form of ADP-ribosylation of proteins in response to DNA damage. Hpf1 acts by completing the active site of parp1 and parp2: forms a composite active site composed of residues from Hpf1 and parp1 or parp2. While hpf1 promotes the initiation of serine ADP-ribosylation, it restricts the polymerase activity of parp1 and parp2 in order to limit the length of poly-ADP-ribose chains. Hpf1 also promotes tyrosine ADP-ribosylation, probably by conferring tyrosine specificity on parp1. In Danio rerio (Zebrafish), this protein is Histone PARylation factor 1.